Consider the following 354-residue polypeptide: Period circadian protein (354 aa).

PAS domains lie at 1–55 and 133–235; these read GIVM…VNGQ and FVMR…HIIE. The segment at 318-354 is disordered; that stretch reads IQDPDHSYYQRDSVMLGGISPHHDYNDSKSSTGTPLS. Positions 345 to 354 are enriched in polar residues; it reads SKSSTGTPLS.

Forms a heterodimer with timeless (TIM); the complex then translocates into the nucleus. Post-translationally, phosphorylated with a circadian rhythmicity.

Its subcellular location is the nucleus. Its function is as follows. Involved in the generation of biological rhythms. The biological cycle depends on the rhythmic formation and nuclear localization of the tim-per complex. Light induces the degradation of tim, which promotes elimination of per. Nuclear activity of the heterodimer coordinatively regulates per and tim transcription negative feedback loop. Behaves as a negative element in circadian transcriptional loop. Does not appear to bind DNA, suggesting indirect transcriptional inhibition. The polypeptide is Period circadian protein (per) (Manduca sexta (Tobacco hawkmoth)).